We begin with the raw amino-acid sequence, 483 residues long: Altronate oxidoreductase (483 aa).

18-29 contributes to the NAD(+) binding site; that stretch reads IIQFGEGNFLRA.

Belongs to the mannitol dehydrogenase family. UxaB subfamily.

It carries out the reaction D-altronate + NAD(+) = keto-D-tagaturonate + NADH + H(+). It participates in carbohydrate metabolism; pentose and glucuronate interconversion. The chain is Altronate oxidoreductase from Escherichia coli (strain 55989 / EAEC).